We begin with the raw amino-acid sequence, 52 residues long: Eukaryotic translation initiation factor 2 subunit 1 (52 aa).

The region spanning 16 to 52 (EDVVMVNVRSIAEMGAYVSLLEYNNIEGRILLSELSR) is the S1 motif domain. At Ser48 the chain carries Phosphoserine; by HRI. A Phosphoserine modification is found at Ser51.

Belongs to the eIF-2-alpha family. As to quaternary structure, eukaryotic translation initiation factor 2 eIF2 is a heterotrimeric complex composed of an alpha (EIF2S1), a beta (EIF2S2) and a gamma (EIF2S3) chain. eIF2 is member of the 43S pre-initiation complex (43S PIC). eIF2 forms a complex with at least CELF1/CUGBP1, CALR, CALR3, EIF2S1, EIF2S2, HSP90B1 and HSPA5. Interaction with METAP2 protects EIF2S1 from inhibitory phosphorylation. Interacts with ABCF1. Associates with ribosomes. Interacts with DDX3X in an RNA-independent manner. Phosphorylation at Ser-48 and Ser-51 stabilizes the eIF-2/GDP/eIF2B complex and prevents GDP/GTP exchange reaction, thus impairing the recycling of eIF-2 between successive rounds of initiation and leading to global inhibition of translation, while concomitantly initiating the preferential translation of integrated stress response (ISR)-specific mRNAs. Substrate for at least 4 kinases: EIF2AK1/HRI, EIF2AK2/PKR, EIF2AK3/PERK and EIF2AK4/GCN2. Phosphorylation on Ser-51 by the EIF2AK4/GCN2 protein kinase occurs in response to amino acid starvation and UV irradiation. Phosphorylation at Ser-51 by the EIF2AK3/PERK protein kinase occurs in response to the unfolded protein response. Phosphorylation at Ser-51 by EIF2AK1/HRI in response to mitochondrial damage promotes relocalization to the mitochondrial surface.

The protein localises to the cytoplasm. It localises to the stress granule. It is found in the cytosol. The protein resides in the mitochondrion. Activity is regulated by phosphorylation at Ser-49 and Ser-52, which stabilizes the eIF2/GDP/eIF2B complex and prevents the eIF2B-mediated exchange of GDP for GTP, thereby preventing the formation of the 43S pre-initiation complex (43S PIC). This results in the global attenuation of 5' cap-dependent protein synthesis and concomitant translation of ISR-specific mRNAs that contain a short upstream open reading frame (uORF) in their 5' UTR, such as ATF4, ATF5, DDIT3/CHOP and PPP1R15A/GADD34. Functionally, member of the eIF2 complex that functions in the early steps of protein synthesis by forming a ternary complex with GTP and initiator tRNA. This complex binds to a 40S ribosomal subunit, followed by mRNA binding to form a 43S pre-initiation complex. Junction of the 60S ribosomal subunit to form the 80S initiation complex is preceded by hydrolysis of the GTP bound to eIF2 and release of an eIF2-GDP binary complex. In order for eIF2 to recycle and catalyze another round of initiation, the GDP bound to eIF2 must exchange with GTP by way of a reaction catalyzed by eIF2B. EIF2S1/eIF2-alpha is a key component of the integrated stress response (ISR), required for adaptation to various stress: phosphorylation by metabolic-stress sensing protein kinases (EIF2AK1/HRI, EIF2AK2/PKR, EIF2AK3/PERK and EIF2AK4/GCN2) in response to stress converts EIF2S1/eIF2-alpha in a global protein synthesis inhibitor, leading to a attenuation of cap-dependent translation, while concomitantly initiating the preferential translation of ISR-specific mRNAs, such as the transcriptional activators ATF4 and QRICH1, and hence allowing ATF4- and QRICH1-mediated reprogramming. EIF2S1/eIF2-alpha also acts as an activator of mitophagy in response to mitochondrial damage: phosphorylation by EIF2AK1/HRI promotes relocalization to the mitochondrial surface, thereby triggering PRKN-independent mitophagy. This chain is Eukaryotic translation initiation factor 2 subunit 1 (EIF2S1), found in Oryctolagus cuniculus (Rabbit).